The following is a 355-amino-acid chain: UDP-N-acetylglucosamine--N-acetylmuramyl-(pentapeptide) pyrophosphoryl-undecaprenol N-acetylglucosamine transferase (355 aa).

Residues 15–17 (TGG), asparagine 127, arginine 163, serine 191, isoleucine 244, 263–268 (ALTVSE), and glutamine 288 each bind UDP-N-acetyl-alpha-D-glucosamine.

This sequence belongs to the glycosyltransferase 28 family. MurG subfamily.

The protein localises to the cell inner membrane. The catalysed reaction is di-trans,octa-cis-undecaprenyl diphospho-N-acetyl-alpha-D-muramoyl-L-alanyl-D-glutamyl-meso-2,6-diaminopimeloyl-D-alanyl-D-alanine + UDP-N-acetyl-alpha-D-glucosamine = di-trans,octa-cis-undecaprenyl diphospho-[N-acetyl-alpha-D-glucosaminyl-(1-&gt;4)]-N-acetyl-alpha-D-muramoyl-L-alanyl-D-glutamyl-meso-2,6-diaminopimeloyl-D-alanyl-D-alanine + UDP + H(+). Its pathway is cell wall biogenesis; peptidoglycan biosynthesis. In terms of biological role, cell wall formation. Catalyzes the transfer of a GlcNAc subunit on undecaprenyl-pyrophosphoryl-MurNAc-pentapeptide (lipid intermediate I) to form undecaprenyl-pyrophosphoryl-MurNAc-(pentapeptide)GlcNAc (lipid intermediate II). This is UDP-N-acetylglucosamine--N-acetylmuramyl-(pentapeptide) pyrophosphoryl-undecaprenol N-acetylglucosamine transferase from Salmonella dublin (strain CT_02021853).